The chain runs to 202 residues: Small ribosomal subunit protein uS4 (202 aa).

An S4 RNA-binding domain is found at 91–168 (SRLSSILYNS…HKVPDYLEVD (78 aa)).

It belongs to the universal ribosomal protein uS4 family. In terms of assembly, part of the 30S ribosomal subunit. Contacts protein S5. The interaction surface between S4 and S5 is involved in control of translational fidelity.

One of the primary rRNA binding proteins, it binds directly to 16S rRNA where it nucleates assembly of the body of the 30S subunit. Its function is as follows. With S5 and S12 plays an important role in translational accuracy. This chain is Small ribosomal subunit protein uS4, found in Ehrlichia canis (strain Jake).